A 479-amino-acid chain; its full sequence is Zinc metalloproteinase/disintegrin (479 aa).

Residues 1-20 (MIQVLLVTICLAAFPYQGSS) form the signal peptide. A propeptide spanning residues 21 to 187 (IILESGKVND…PIKKASQLIV (167 aa)) is cleaved from the precursor. Residues 193-390 (RYMEIVIVVD…ENPPCILNKP (198 aa)) form the Peptidase M12B domain. Ca(2+) contacts are provided by E196 and D280. Disulfide bonds link C304–C385, C344–C369, and C346–C352. H329 serves as a coordination point for Zn(2+). Residue E330 is part of the active site. Residues H333 and H339 each coordinate Zn(2+). Positions 385 and 388 each coordinate Ca(2+). The propeptide occupies 390–414 (PLRTDTVSTPVSGNELLEAGKDYDR). The 82-residue stretch at 398–479 (TPVSGNELLE…ADCPRNPYHA (82 aa)) folds into the Disintegrin domain. Cystine bridges form between C435–C441, C440–C465, and C453–C472. A Cell attachment site motif is present at residues 457–459 (RGD).

The protein belongs to the venom metalloproteinase (M12B) family. P-II subfamily. P-IIa sub-subfamily. As to quaternary structure, monomer. The cofactor is Zn(2+). As to expression, expressed by the venom gland.

It is found in the secreted. Its function is as follows. Snake venom metalloproteinase that impairs hemostasis in the envenomed animal. In terms of biological role, inhibits platelet aggregation induced by ADP, thrombin, platelet-activating factor and collagen. Acts by inhibiting fibrinogen interaction with platelet receptors GPIIb/GPIIIa (ITGA2B/ITGB3). The polypeptide is Zinc metalloproteinase/disintegrin (Deinagkistrodon acutus (Hundred-pace snake)).